The primary structure comprises 212 residues: General odorant-binding protein 68 (212 aa).

Positions 1–28 (MATTIARIGSANWAKLLVLLWLVQLATA) are cleaved as a signal peptide. 3 disulfide bridges follow: cysteine 64–cysteine 85, cysteine 80–cysteine 152, and cysteine 130–cysteine 162.

The protein belongs to the PBP/GOBP family.

The protein resides in the secreted. Its function is as follows. Present in the aqueous fluid surrounding olfactory sensory dendrites and are thought to aid in the capture and transport of hydrophobic odorants into and through this fluid. This Anopheles gambiae (African malaria mosquito) protein is General odorant-binding protein 68 (Obp68).